We begin with the raw amino-acid sequence, 122 residues long: NADH-quinone oxidoreductase subunit A (122 aa).

The next 3 helical transmembrane spans lie at 10–30 (LIVFVFLCLGVLLPIGALTIG), 67–87 (FALLFVIFDVETVFLYPWAVV), and 91–111 (LGLFALVEMIIFIVLLAIGLI).

Belongs to the complex I subunit 3 family. In terms of assembly, NDH-1 is composed of 14 different subunits. Subunits NuoA, H, J, K, L, M, N constitute the membrane sector of the complex.

It is found in the cell membrane. It carries out the reaction a quinone + NADH + 5 H(+)(in) = a quinol + NAD(+) + 4 H(+)(out). Its function is as follows. NDH-1 shuttles electrons from NADH, via FMN and iron-sulfur (Fe-S) centers, to quinones in the respiratory chain. The immediate electron acceptor for the enzyme in this species is believed to be a menaquinone. Couples the redox reaction to proton translocation (for every two electrons transferred, four hydrogen ions are translocated across the cytoplasmic membrane), and thus conserves the redox energy in a proton gradient. This chain is NADH-quinone oxidoreductase subunit A, found in Geobacillus thermodenitrificans (strain NG80-2).